The following is a 101-amino-acid chain: uncharacterized protein (101 aa).

A compositionally biased stretch (basic residues) spans Met1 to Lys12. Disordered stretches follow at residues Met1–Ala30 and Ala65–Lys87. A compositionally biased stretch (low complexity) spans Ala65–Arg78.

This is an uncharacterized protein from Eremothecium gossypii (strain ATCC 10895 / CBS 109.51 / FGSC 9923 / NRRL Y-1056) (Yeast).